The primary structure comprises 128 residues: Probable 4-amino-4-deoxy-L-arabinose-phosphoundecaprenol flippase subunit ArnF (128 aa).

Over methionine 1–cysteine 2 the chain is Cytoplasmic. The helical transmembrane segment at leucine 3–alanine 23 threads the bilayer. Topologically, residues alanine 24–aspartate 35 are periplasmic. A helical membrane pass occupies residues phenylalanine 36–glycine 56. At tyrosine 57–alanine 76 the chain is on the cytoplasmic side. Residues tyrosine 77–tryptophan 97 form a helical membrane-spanning segment. The Periplasmic segment spans residues glutamate 98 to threonine 100. A helical transmembrane segment spans residues phenylalanine 101–leucine 121. The Cytoplasmic portion of the chain corresponds to proline 122 to tyrosine 128.

Belongs to the ArnF family. Heterodimer of ArnE and ArnF.

It is found in the cell inner membrane. It functions in the pathway bacterial outer membrane biogenesis; lipopolysaccharide biosynthesis. In terms of biological role, translocates 4-amino-4-deoxy-L-arabinose-phosphoundecaprenol (alpha-L-Ara4N-phosphoundecaprenol) from the cytoplasmic to the periplasmic side of the inner membrane. In Shigella flexneri, this protein is Probable 4-amino-4-deoxy-L-arabinose-phosphoundecaprenol flippase subunit ArnF.